Consider the following 212-residue polypeptide: Adenylate kinase (212 aa).

10-15 (GSGKGT) contributes to the ATP binding site. An NMP region spans residues 30-59 (STGDLMRKEINDETPLGIECARYMNEGRLV). AMP contacts are provided by residues Thr31, Arg36, 57 to 59 (RLV), and Gln90. The segment at 124–161 (GRLICPKCKVSYHIISRKPKLEGICDNDGTELVRRPDD) is LID. Arg125 provides a ligand contact to ATP. 2 residues coordinate Zn(2+): Cys128 and Cys131. 134 to 135 (SY) contributes to the ATP binding site. Zn(2+) contacts are provided by Cys148 and Asp151. AMP contacts are provided by Arg158 and Arg169. Position 198 (Asn198) interacts with ATP.

The protein belongs to the adenylate kinase family. In terms of assembly, monomer.

The protein resides in the cytoplasm. It carries out the reaction AMP + ATP = 2 ADP. The protein operates within purine metabolism; AMP biosynthesis via salvage pathway; AMP from ADP: step 1/1. Its function is as follows. Catalyzes the reversible transfer of the terminal phosphate group between ATP and AMP. Plays an important role in cellular energy homeostasis and in adenine nucleotide metabolism. This is Adenylate kinase from Mesoplasma florum (strain ATCC 33453 / NBRC 100688 / NCTC 11704 / L1) (Acholeplasma florum).